Reading from the N-terminus, the 1034-residue chain is Glycine dehydrogenase (decarboxylating), mitochondrial (1034 aa).

The N-terminal 63 residues, 1–63, are a transit peptide targeting the mitochondrion; sequence MERARRLAML…LNGFGSQVRT (63 aa). At Lys770 the chain carries N6-(pyridoxal phosphate)lysine.

It belongs to the GcvP family. As to quaternary structure, homodimer. The glycine cleavage system is composed of four proteins: P, T, L and H. Pyridoxal 5'-phosphate serves as cofactor.

The protein resides in the mitochondrion. It carries out the reaction N(6)-[(R)-lipoyl]-L-lysyl-[glycine-cleavage complex H protein] + glycine + H(+) = N(6)-[(R)-S(8)-aminomethyldihydrolipoyl]-L-lysyl-[glycine-cleavage complex H protein] + CO2. Functionally, the glycine cleavage system catalyzes the degradation of glycine. The P protein binds the alpha-amino group of glycine through its pyridoxal phosphate cofactor; CO(2) is released and the remaining methylamine moiety is then transferred to the lipoamide cofactor of the H protein. The protein is Glycine dehydrogenase (decarboxylating), mitochondrial (GDCSPA) of Flaveria trinervia (Clustered yellowtops).